Consider the following 256-residue polypeptide: Thiazole synthase (256 aa).

Lys-95 serves as the catalytic Schiff-base intermediate with DXP. 1-deoxy-D-xylulose 5-phosphate-binding positions include Gly-156, 182–183 (AG), and 204–205 (NT).

Belongs to the ThiG family. Homotetramer. Forms heterodimers with either ThiH or ThiS.

The protein resides in the cytoplasm. The catalysed reaction is [ThiS sulfur-carrier protein]-C-terminal-Gly-aminoethanethioate + 2-iminoacetate + 1-deoxy-D-xylulose 5-phosphate = [ThiS sulfur-carrier protein]-C-terminal Gly-Gly + 2-[(2R,5Z)-2-carboxy-4-methylthiazol-5(2H)-ylidene]ethyl phosphate + 2 H2O + H(+). It participates in cofactor biosynthesis; thiamine diphosphate biosynthesis. In terms of biological role, catalyzes the rearrangement of 1-deoxy-D-xylulose 5-phosphate (DXP) to produce the thiazole phosphate moiety of thiamine. Sulfur is provided by the thiocarboxylate moiety of the carrier protein ThiS. In vitro, sulfur can be provided by H(2)S. This chain is Thiazole synthase, found in Escherichia coli O6:H1 (strain CFT073 / ATCC 700928 / UPEC).